Consider the following 243-residue polypeptide: Myelin protein P0 (243 aa).

Residues 1 to 26 (MESSGLRAPCSLLVLLSALVLPPTLA) form the signal peptide. An Ig-like V-type domain is found at 27–141 (IEVYTDREVY…VGKSSYVHLQ (115 aa)). At 27–154 (IEVYTDREVY…KGAARAGLVL (128 aa)) the chain is on the extracellular side. Cys47 and Cys123 are disulfide-bonded. An N-linked (GlcNAc...) asparagine glycan is attached at Asn118. The chain crosses the membrane as a helical span at residues 155 to 175 (GIIIAVALALVIVVTILILLI). Residues 176–243 (RYCWLRRQVR…GIGDSRKDRK (68 aa)) are Cytoplasmic-facing. Positions 201-243 (AKDSSKRSSRQTPILYAMLDQTRGKASEKKGKGGIGDSRKDRK) are disordered. Residues 222–243 (TRGKASEKKGKGGIGDSRKDRK) are compositionally biased toward basic and acidic residues.

It belongs to the myelin P0 protein family.

The protein localises to the cell membrane. Creation of an extracellular membrane face which guides the wrapping process and ultimately compacts adjacent lamellae. The protein is Myelin protein P0 (mpz) of Xenopus tropicalis (Western clawed frog).